The primary structure comprises 328 residues: LOB domain-containing protein 27 (328 aa).

In terms of domain architecture, LOB spans 35–136 (GACAACKYQR…EELKAVNSQL (102 aa)).

Belongs to the LOB domain-containing protein family.

This chain is LOB domain-containing protein 27 (LBD27), found in Arabidopsis thaliana (Mouse-ear cress).